The chain runs to 182 residues: MSLNLNDKKAVVAEISAKVATAQTIVVAEYRGIQVGHLTQLRAKARDQGVYLRVLKNTLARRAVEGTAFADLASEMTGPLIYSISDDAVAAAKVISDFAKTNDKLVVKAGNYAGKTLDKAAVTALANIPSREVLLAQVLGMMLVPVASFTRGLAALAAKKAEGETPAAAAEPVAEVTEAAAE.

Belongs to the universal ribosomal protein uL10 family. Part of the ribosomal stalk of the 50S ribosomal subunit. The N-terminus interacts with L11 and the large rRNA to form the base of the stalk. The C-terminus forms an elongated spine to which L12 dimers bind in a sequential fashion forming a multimeric L10(L12)X complex.

Functionally, forms part of the ribosomal stalk, playing a central role in the interaction of the ribosome with GTP-bound translation factors. In Herminiimonas arsenicoxydans, this protein is Large ribosomal subunit protein uL10.